Reading from the N-terminus, the 578-residue chain is Triokinase/FMN cyclase (578 aa).

Residues 9 to 336 (SVAGCADDAL…IDAETTASAW (328 aa)) form the DhaK domain. Dihydroxyacetone is bound by residues 56 to 59 (GSGH), Lys-109, and Asp-114. His-221 serves as the catalytic Tele-hemiaminal-histidine intermediate. Ser-350 is subject to Phosphoserine. The 200-residue stretch at 372 to 571 (KQMVLVLEWV…AAAILRAILE (200 aa)) folds into the DhaL domain. ATP is bound by residues 401–404 (DGDC), 446–447 (SS), Gly-486, and 494–495 (TM). Ser-511 and Ser-545 each carry phosphoserine. Position 556-558 (556-558 (DPG)) interacts with ATP.

As to quaternary structure, homodimer. Interacts with IFIH1 (via the CARD domains), the interaction is inhibited by viral infection. Requires Mg(2+) as cofactor. It depends on Mn(2+) as a cofactor. Co(2+) is required as a cofactor.

It carries out the reaction dihydroxyacetone + ATP = dihydroxyacetone phosphate + ADP + H(+). The catalysed reaction is D-glyceraldehyde + ATP = D-glyceraldehyde 3-phosphate + ADP + H(+). The enzyme catalyses FAD = riboflavin cyclic-4',5'-phosphate + AMP + H(+). Its activity is regulated as follows. Each activity is inhibited by the substrate(s) of the other. Catalyzes both the phosphorylation of dihydroxyacetone and of glyceraldehyde, and the splitting of ribonucleoside diphosphate-X compounds among which FAD is the best substrate. Represses IFIH1-mediated cellular antiviral response. The chain is Triokinase/FMN cyclase (TKFC) from Bos taurus (Bovine).